The following is a 150-amino-acid chain: Large ribosomal subunit protein bL9 (150 aa).

The protein belongs to the bacterial ribosomal protein bL9 family.

Functionally, binds to the 23S rRNA. This chain is Large ribosomal subunit protein bL9, found in Alcanivorax borkumensis (strain ATCC 700651 / DSM 11573 / NCIMB 13689 / SK2).